A 498-amino-acid chain; its full sequence is Putative antiporter subunit mnhD2 (498 aa).

The next 14 membrane-spanning stretches (helical) occupy residues 2-22 (LSNL…ILVF), 32-52 (YLYL…LIYV), 78-98 (LSLI…AYGF), 108-128 (YHLP…FLTS), 130-150 (LFNL…LITL), 161-181 (IIYV…IGLL), 209-229 (ISLI…FMWL), 240-260 (LAAL…IRFF), 271-291 (IHPL…IGVI), 308-328 (IGFI…GAIF), 330-350 (LVND…LVYI), 369-389 (FGVA…FSGF), 406-426 (IGLA…FRIF), and 451-471 (ILSI…VVLN).

It belongs to the CPA3 antiporters (TC 2.A.63) subunit D family. In terms of assembly, may form a heterooligomeric complex that consists of seven subunits: mnhA2, mnhB2, mnhC2, mnhD2, mnhE2, mnhF2 and mnhG2.

The protein localises to the cell membrane. The chain is Putative antiporter subunit mnhD2 (mnhD2) from Staphylococcus aureus (strain Mu3 / ATCC 700698).